A 244-amino-acid polypeptide reads, in one-letter code: 5-oxoprolinase subunit A (244 aa).

The protein belongs to the LamB/PxpA family. In terms of assembly, forms a complex composed of PxpA, PxpB and PxpC.

The enzyme catalyses 5-oxo-L-proline + ATP + 2 H2O = L-glutamate + ADP + phosphate + H(+). In terms of biological role, catalyzes the cleavage of 5-oxoproline to form L-glutamate coupled to the hydrolysis of ATP to ADP and inorganic phosphate. The chain is 5-oxoprolinase subunit A from Salmonella typhimurium (strain LT2 / SGSC1412 / ATCC 700720).